The primary structure comprises 94 residues: Small ribosomal subunit protein uS19 (94 aa).

This sequence belongs to the universal ribosomal protein uS19 family.

Its function is as follows. Protein S19 forms a complex with S13 that binds strongly to the 16S ribosomal RNA. This chain is Small ribosomal subunit protein uS19, found in Syntrophomonas wolfei subsp. wolfei (strain DSM 2245B / Goettingen).